Here is a 142-residue protein sequence, read N- to C-terminus: Holo-[acyl-carrier-protein] synthase (142 aa).

Positions 9 and 63 each coordinate Mg(2+).

This sequence belongs to the P-Pant transferase superfamily. AcpS family. Mg(2+) serves as cofactor.

The protein localises to the cytoplasm. The catalysed reaction is apo-[ACP] + CoA = holo-[ACP] + adenosine 3',5'-bisphosphate + H(+). In terms of biological role, transfers the 4'-phosphopantetheine moiety from coenzyme A to a Ser of acyl-carrier-protein. This chain is Holo-[acyl-carrier-protein] synthase, found in Burkholderia lata (strain ATCC 17760 / DSM 23089 / LMG 22485 / NCIMB 9086 / R18194 / 383).